Consider the following 113-residue polypeptide: MKTSKTVAKLLFVVGALVYLVGLWISCPLLSGKGYFLGVLMTATFGNYAYLRAEKLGQLDDFFTHICQLVALITIGLLFIGVLNAPINTYEMVIYPIAFFVCLFGQMRLFRSA.

The Cytoplasmic segment spans residues methionine 1 to lysine 9. Residues leucine 10–leucine 20 traverse the membrane as a helical segment. At valine 21 to lysine 33 the chain is on the periplasmic side. A helical transmembrane segment spans residues glycine 34–leucine 51. Topologically, residues arginine 52–aspartate 61 are cytoplasmic. A helical transmembrane segment spans residues phenylalanine 62 to valine 82. The Periplasmic segment spans residues leucine 83 to asparagine 84. Residues alanine 85–glycine 105 form a helical membrane-spanning segment. The Cytoplasmic portion of the chain corresponds to glutamine 106–alanine 113.

It localises to the cell inner membrane. This Escherichia coli (strain K12) protein is Inner membrane protein YiaB (yiaB).